A 156-amino-acid chain; its full sequence is Transcription factor MafF (156 aa).

The interval 51–76 (RLKQRRRTLKNRGYAASCRVKRVCQK) is basic motif. Residues 51–114 (RLKQRRRTLK…DALRGKCEAL (64 aa)) enclose the bZIP domain. A leucine-zipper region spans residues 79 to 93 (LQKQKSELEREVDKL).

Belongs to the bZIP family. Maf subfamily. As to quaternary structure, monomer and homo- or heterodimer. Interacts with MIP. Forms high affinity heterodimers with members of the CNC-bZIP family such as NFE2L1/NRF1. In terms of tissue distribution, highly expressed in the lung, lower expression in the brain, thymus, liver, spleen, intestine, kidney, heart, muscle, and ovary. Not significantly expressed in hematopoietic cells.

It is found in the nucleus. Since they lack a putative transactivation domain, the small Mafs behave as transcriptional repressors when they dimerize among themselves. However, they seem to serve as transcriptional activators by dimerizing with other (usually larger) basic-zipper proteins, such as NFE2L1/NRF1, and recruiting them to specific DNA-binding sites. Interacts with the upstream promoter region of the oxytocin receptor gene. May be a transcriptional enhancer in the up-regulation of the oxytocin receptor gene at parturition. The sequence is that of Transcription factor MafF (Maff) from Mus musculus (Mouse).